Consider the following 421-residue polypeptide: MRVELLCTGDELVTGLITDTNSTYLEARLFDLGVKVERVVLVGDVRPDIIQSLKEAASRADVVVVSGGLGPTADDFTLECAAEAAGVPLEEDAQVLDWLHQRYAARGLSPNPSALRMARVPQGSEPVKNPEGSAPLVVMKLGGAQLFFLPGVPREFKALLEGEVLPRIRATLDARPERTYRAFRLLRTVGIPESELDIAVAPMGPRHPRIVFGFRTHAPENHLKLMAEAPSQSEADAALAAVEVECRQMLGTKLFGVDSEAYAAVVLETLRRAGATLAVAESCTGGLIAQQLTAVPGSSEVFIGGAVVYSEKMKSAWVGVPPDVLARHTAVSRETAEAMAEGVRDACGTTYGLSVTGYAGPGGGTPEDPVGTVYCALSAPGVPTRCERISVTGDRDRVRLFAASHTLEMLRQHLLAAPATP.

Belongs to the CinA family.

The polypeptide is CinA-like protein (Myxococcus xanthus (strain DK1622)).